Here is a 414-residue protein sequence, read N- to C-terminus: Probable 26S proteasome regulatory subunit 6B (414 aa).

Residue 202–209 (GPPGCGKT) coordinates ATP.

This sequence belongs to the AAA ATPase family.

The protein resides in the cytoplasm. Its subcellular location is the nucleus. In terms of biological role, the 26S proteasome is involved in the ATP-dependent degradation of ubiquitinated proteins. The regulatory (or ATPase) complex confers ATP dependency and substrate specificity to the 26S complex. This is Probable 26S proteasome regulatory subunit 6B (rpt-3) from Caenorhabditis elegans.